We begin with the raw amino-acid sequence, 290 residues long: Acetyl-coenzyme A carboxylase carboxyl transferase subunit beta (290 aa).

The 264-residue stretch at 27–290 folds into the CoA carboxyltransferase N-terminal domain; the sequence is LWHKCPSCEA…FTHSPSPVSA (264 aa). Zn(2+) contacts are provided by C31, C34, C50, and C53. Residues 31-53 form a C4-type zinc finger; sequence CPSCEAVLYRPELEKTLDVCPKC.

It belongs to the AccD/PCCB family. In terms of assembly, acetyl-CoA carboxylase is a heterohexamer composed of biotin carboxyl carrier protein (AccB), biotin carboxylase (AccC) and two subunits each of ACCase subunit alpha (AccA) and ACCase subunit beta (AccD). The cofactor is Zn(2+).

It localises to the cytoplasm. The enzyme catalyses N(6)-carboxybiotinyl-L-lysyl-[protein] + acetyl-CoA = N(6)-biotinyl-L-lysyl-[protein] + malonyl-CoA. It participates in lipid metabolism; malonyl-CoA biosynthesis; malonyl-CoA from acetyl-CoA: step 1/1. In terms of biological role, component of the acetyl coenzyme A carboxylase (ACC) complex. Biotin carboxylase (BC) catalyzes the carboxylation of biotin on its carrier protein (BCCP) and then the CO(2) group is transferred by the transcarboxylase to acetyl-CoA to form malonyl-CoA. The polypeptide is Acetyl-coenzyme A carboxylase carboxyl transferase subunit beta (Pseudomonas aeruginosa (strain UCBPP-PA14)).